The following is an 80-amino-acid chain: Defensin-like protein 276 (80 aa).

The first 24 residues, 1–24 (MSGQKYQLVSLLLIICLLFSQSTA), serve as a signal peptide directing secretion. Cystine bridges form between cysteine 27–cysteine 67, cysteine 33–cysteine 55, cysteine 39–cysteine 65, and cysteine 43–cysteine 66.

Belongs to the DEFL family.

Its subcellular location is the secreted. The sequence is that of Defensin-like protein 276 from Arabidopsis thaliana (Mouse-ear cress).